The chain runs to 251 residues: HTH-type transcriptional regulator UlaR (251 aa).

One can recognise an HTH deoR-type domain in the interval 3 to 58 (EAQRHQILLEMLAQLGFVTVEKVVERLGISPATARRDINKLDESGKLKKVRNGAEA). The H-T-H motif DNA-binding region spans 20–39 (VTVEKVVERLGISPATARRD).

It localises to the cytoplasm. In terms of biological role, represses ulaG and the ulaABCDEF operon. This is HTH-type transcriptional regulator UlaR from Escherichia coli (strain SMS-3-5 / SECEC).